The primary structure comprises 1179 residues: uncharacterized protein (1179 aa).

This is an uncharacterized protein from Ictaluridae (bullhead catfishes).